A 94-amino-acid polypeptide reads, in one-letter code: Co-chaperonin GroES (94 aa).

This sequence belongs to the GroES chaperonin family. Heptamer of 7 subunits arranged in a ring. Interacts with the chaperonin GroEL.

The protein resides in the cytoplasm. Functionally, together with the chaperonin GroEL, plays an essential role in assisting protein folding. The GroEL-GroES system forms a nano-cage that allows encapsulation of the non-native substrate proteins and provides a physical environment optimized to promote and accelerate protein folding. GroES binds to the apical surface of the GroEL ring, thereby capping the opening of the GroEL channel. In Lactococcus lactis subsp. cremoris (strain SK11), this protein is Co-chaperonin GroES.